The chain runs to 238 residues: LRRN4 C-terminal-like protein (238 aa).

The signal sequence occupies residues 1–22; that stretch reads MLGSPCLLWLLAVTFLVPRAQP. Topologically, residues 23–194 are extracellular; the sequence is LAPQDFEEEE…RLAVPPNPRT (172 aa). Residues 82–176 form the Fibronectin type-III domain; that stretch reads PPDPPRMGEV…AGGEGLEGAD (95 aa). Residue N132 is glycosylated (N-linked (GlcNAc...) asparagine). The chain crosses the membrane as a helical span at residues 195–215; the sequence is LVHAAVGVGTALALLSCAALV. Topologically, residues 216-238 are cytoplasmic; that stretch reads WHFCLRDRWGCPRRAAARAAGAL.

The protein localises to the membrane. This Homo sapiens (Human) protein is LRRN4 C-terminal-like protein (LRRN4CL).